The chain runs to 159 residues: Nucleoside diphosphate kinase (159 aa).

ATP is bound by residues K13, F61, R89, T95, R106, and N116. The active-site Pros-phosphohistidine intermediate is H119.

Belongs to the NDK family. Requires Mg(2+) as cofactor.

It localises to the cytoplasm. The catalysed reaction is a 2'-deoxyribonucleoside 5'-diphosphate + ATP = a 2'-deoxyribonucleoside 5'-triphosphate + ADP. It catalyses the reaction a ribonucleoside 5'-diphosphate + ATP = a ribonucleoside 5'-triphosphate + ADP. Major role in the synthesis of nucleoside triphosphates other than ATP. The ATP gamma phosphate is transferred to the NDP beta phosphate via a ping-pong mechanism, using a phosphorylated active-site intermediate. The chain is Nucleoside diphosphate kinase from Halorubrum lacusprofundi (strain ATCC 49239 / DSM 5036 / JCM 8891 / ACAM 34).